A 601-amino-acid chain; its full sequence is Glutathione-regulated potassium-efflux system protein KefB (601 aa).

Helical transmembrane passes span 4-24 (ADLL…VPLA), 29-49 (IGAV…GLGF), 55-75 (EILH…GLEL), 87-107 (IFGV…GLLM), 111-131 (FLWQ…TAMA), 152-172 (VLLF…LLAG), 177-197 (HFDW…LIGG), 207-227 (FIAA…LVLS), 230-250 (LFMD…GVLL), 262-282 (AIDP…GMSL), 284-304 (LGVL…LVVI), 324-344 (MQFA…FSTA), and 356-376 (ALLL…MKGI). The RCK N-terminal domain maps to 400–519 (KPQVIVVGFG…AGVTQFSRET (120 aa)).

Belongs to the monovalent cation:proton antiporter 2 (CPA2) transporter (TC 2.A.37) family. KefB subfamily. Interacts with the regulatory subunit KefG.

The protein localises to the cell inner membrane. Its function is as follows. Pore-forming subunit of a potassium efflux system that confers protection against electrophiles. Catalyzes K(+)/H(+) antiport. The polypeptide is Glutathione-regulated potassium-efflux system protein KefB (Salmonella paratyphi C (strain RKS4594)).